A 133-amino-acid polypeptide reads, in one-letter code: Small heat shock protein ibp (133 aa).

Residues 11–126 form the sHSP domain; sequence EQPLSENPNY…KPKKISINEE (116 aa).

Belongs to the small heat shock protein (HSP20) family.

The chain is Small heat shock protein ibp (ibp) from Wigglesworthia glossinidia brevipalpis.